A 215-amino-acid polypeptide reads, in one-letter code: MASGDTKTSVKHAHPCAERLSLQQEEGEAEDYCTPGAFELERLFWKGSPQYTHVNEVWPRLHVGDEATALDRYGLQKAGFTHVLNAAHGRWNVDTGPDYYRDMAIEYHGVEADDVPTFDLSIFFYSAAAFIDSALQDDHSKILVHCAMGRSRSATLVLAYLMIHKNMTLVDAIQQVAKNRCVLPNRGFLKQLRELDKQLVKQRRQAGPGAGELGL.

The 149-residue stretch at 53–201 (HVNEVWPRLH…LRELDKQLVK (149 aa)) folds into the Tyrosine-protein phosphatase domain. Residue 145 to 152 (HCAMGRSR) coordinates substrate. Catalysis depends on Cys-146, which acts as the Phosphocysteine intermediate.

It belongs to the protein-tyrosine phosphatase family. Non-receptor class dual specificity subfamily. Homodimer. Interacts with PRKAA2.

It is found in the cytoplasm. Its subcellular location is the nucleus. The enzyme catalyses O-phospho-L-tyrosyl-[protein] + H2O = L-tyrosyl-[protein] + phosphate. It catalyses the reaction O-phospho-L-seryl-[protein] + H2O = L-seryl-[protein] + phosphate. It carries out the reaction O-phospho-L-threonyl-[protein] + H2O = L-threonyl-[protein] + phosphate. Its function is as follows. Dual specificity phosphatase able to dephosphorylate phosphotyrosine, phosphoserine and phosphothreonine residues within the same substrate, with a preference for phosphotyrosine as a substrate. Involved in the modulation of intracellular signaling cascades. In skeletal muscle regulates systemic glucose homeostasis by activating, AMPK, an energy sensor protein kinase. Affects MAP kinase signaling though modulation of the MAPK1/2 cascade in skeletal muscle promoting muscle cell differentiation, development and atrophy. The sequence is that of Dual specificity phosphatase 29 (Dusp29) from Rattus norvegicus (Rat).